The sequence spans 337 residues: Autophagy-related protein 14 (337 aa).

Residues 5–20 are cysteine repeats; it reads CSVCRNHVQSMYCAHC. Residues 87–153 adopt a coiled-coil conformation; sequence KRNNRVRYRI…NEVVKREQEL (67 aa).

The protein belongs to the ATG14 family.

It is found in the preautophagosomal structure membrane. The protein localises to the vacuole membrane. Functionally, required for cytoplasm to vacuole transport (Cvt) and autophagy as a part of the autophagy-specific VPS34 PI3-kinase complex I. This complex is essential to recruit the ATG8-phosphatidylinositol conjugate and the ATG12-ATG5 conjugate to the pre-autophagosomal structure. ATG14 mediates the specific binding of the VPS34 PI3-kinase complex I to the preautophagosomal structure (PAS). This chain is Autophagy-related protein 14 (ATG14), found in Vanderwaltozyma polyspora (strain ATCC 22028 / DSM 70294 / BCRC 21397 / CBS 2163 / NBRC 10782 / NRRL Y-8283 / UCD 57-17) (Kluyveromyces polysporus).